The following is a 504-amino-acid chain: Pyruvate kinase (504 aa).

Arg53 contributes to the substrate binding site. Positions 55, 57, 88, and 89 each coordinate K(+). 55-58 (NFSH) contacts ATP. Residues Arg95 and Lys181 each coordinate ATP. Residue Glu246 participates in Mg(2+) binding. The substrate site is built by Gly269, Asp270, and Thr302. Position 270 (Asp270) interacts with Mg(2+).

This sequence belongs to the pyruvate kinase family. Homotetramer. It depends on Mg(2+) as a cofactor. The cofactor is K(+).

Its subcellular location is the cytoplasm. The enzyme catalyses pyruvate + ATP = phosphoenolpyruvate + ADP + H(+). The protein operates within carbohydrate degradation; glycolysis; pyruvate from D-glyceraldehyde 3-phosphate: step 5/5. This chain is Pyruvate kinase (CDC19), found in Candida albicans (strain SC5314 / ATCC MYA-2876) (Yeast).